Consider the following 691-residue polypeptide: MARSPVEPPASQPAKRAAWLRAELERANYAYYVLDQPDLPDAEYDRLFVELQRIEAEHPDLVTPDSPTQRVGGEAASGFTPVVHDKPMLSLNNGFADEDVIAFDKRVADGLDKATDLAGTVTEPVEYACELKFDGLAISLRYENGRFVQASTRGDGTTGEDVTENIRTIRAIPLTLKGKRIPRMLDVRGEVLMFKRDFARLNERQRAAGQREFANPRNAAAGSLRQLDSKITASRPLSFFAYGIGVLDGADMPDTHSGLLDWYETLGLPVNRERAVVRGAAGLLAFFHSVGERRESLPYDIDGVVYKVNRRDEQDRLGFVSRAPRFALAHKFPAQEALTKLIAIDVQVGRTGAITPVARLEPVFVGGATVTNATLHNEDEVRRKDIRIGDTVIVRRAGDVIPEVVSAVLDRRPADAQEFVMPTECPECGSRIERLPDEAIARCTGGLFCPAQRKQALWHFAQRRALDIDGLGEKIIDQLVEQNLVRTPADLFNLGFSTLVALDRFAEKSARNLIDSLEKAKHTTLARFIYALGIRHVGESTAKDLAKHFGSLDPIMHAPIDALLEVNDVGPIVAESIHQFFAEEHNRTVIEQLRARGKVTWPEGPPAPRAPQGVLAGKTVVLTGTLPTLTREAAKEMLEAAGAKVAGSVSKKTDYVVAGADAGSKLAKAEELGIPVLDEAGMHTLLEGHAR.

NAD(+)-binding positions include 41–45 (DAEYD), 90–91 (SL), and E130. The active-site N6-AMP-lysine intermediate is the K132. 4 residues coordinate NAD(+): R153, E190, K307, and K331. 4 residues coordinate Zn(2+): C425, C428, C443, and C449. The 82-residue stretch at 610–691 (APQGVLAGKT…MHTLLEGHAR (82 aa)) folds into the BRCT domain.

Belongs to the NAD-dependent DNA ligase family. LigA subfamily. Requires Mg(2+) as cofactor. The cofactor is Mn(2+).

It catalyses the reaction NAD(+) + (deoxyribonucleotide)n-3'-hydroxyl + 5'-phospho-(deoxyribonucleotide)m = (deoxyribonucleotide)n+m + AMP + beta-nicotinamide D-nucleotide.. Functionally, DNA ligase that catalyzes the formation of phosphodiester linkages between 5'-phosphoryl and 3'-hydroxyl groups in double-stranded DNA using NAD as a coenzyme and as the energy source for the reaction. It is essential for DNA replication and repair of damaged DNA. This is DNA ligase from Burkholderia pseudomallei (strain 1710b).